Here is a 246-residue protein sequence, read N- to C-terminus: 4-aminobenzoate synthase (246 aa).

Residues Glu-88, His-95, Glu-149, His-181, Asp-185, and His-188 each contribute to the Fe(2+) site.

Belongs to the CADD family. Homodimer. Fe(2+) serves as cofactor. Requires Mn(2+) as cofactor.

Its function is as follows. Involved in de novo para-aminobenzoate (PABA) biosynthesis. Acts as a self-sacrificing or 'suicide' enzyme that utilizes its own active site tyrosine residue(s) as the substrate for PABA synthesis. The side chain of the tyrosine residue is released from the protein backbone via cleavage of the C(alpha)-C(beta) bond, leaving a glycine in place of the original tyrosine residue. Reaction requires O(2) and a reduced dimetal cofactor. The protein is 4-aminobenzoate synthase of Nitrosomonas europaea (strain ATCC 19718 / CIP 103999 / KCTC 2705 / NBRC 14298).